Here is a 337-residue protein sequence, read N- to C-terminus: tRNA N6-adenosine threonylcarbamoyltransferase (337 aa).

Positions 110 and 114 each coordinate Fe cation. Substrate contacts are provided by residues 132–136, aspartate 165, glycine 178, aspartate 182, and asparagine 268; that span reads VVSGG. Fe cation is bound at residue aspartate 293.

The protein belongs to the KAE1 / TsaD family. Requires Fe(2+) as cofactor.

The protein localises to the cytoplasm. The catalysed reaction is L-threonylcarbamoyladenylate + adenosine(37) in tRNA = N(6)-L-threonylcarbamoyladenosine(37) in tRNA + AMP + H(+). In terms of biological role, required for the formation of a threonylcarbamoyl group on adenosine at position 37 (t(6)A37) in tRNAs that read codons beginning with adenine. Is involved in the transfer of the threonylcarbamoyl moiety of threonylcarbamoyl-AMP (TC-AMP) to the N6 group of A37, together with TsaE and TsaB. TsaD likely plays a direct catalytic role in this reaction. This Sulfurihydrogenibium sp. (strain YO3AOP1) protein is tRNA N6-adenosine threonylcarbamoyltransferase.